We begin with the raw amino-acid sequence, 122 residues long: MARIAGIDLPRNKRIEVALTYIYGIGRSSSQDILQKAGVDPNTRTDELTEAEAGQIRDIIDGQMQVEGDLRRVVTGNIKRLMDLGCYRGLRHRRGLPVRGQKTKTNARTRKGPRKTVAGKRK.

Positions 94–122 (RGLPVRGQKTKTNARTRKGPRKTVAGKRK) are disordered.

Belongs to the universal ribosomal protein uS13 family. As to quaternary structure, part of the 30S ribosomal subunit. Forms a loose heterodimer with protein S19. Forms two bridges to the 50S subunit in the 70S ribosome.

Functionally, located at the top of the head of the 30S subunit, it contacts several helices of the 16S rRNA. In the 70S ribosome it contacts the 23S rRNA (bridge B1a) and protein L5 of the 50S subunit (bridge B1b), connecting the 2 subunits; these bridges are implicated in subunit movement. Contacts the tRNAs in the A and P-sites. This chain is Small ribosomal subunit protein uS13, found in Syntrophotalea carbinolica (strain DSM 2380 / NBRC 103641 / GraBd1) (Pelobacter carbinolicus).